A 217-amino-acid chain; its full sequence is tRNA 5-hydroxyuridine methyltransferase (217 aa).

S-adenosyl-L-methionine contacts are provided by residues M38, S68, E85, 113 to 114 (DA), and D133. Mg(2+) is bound by residues D133, D159, and N160.

This sequence belongs to the class I-like SAM-binding methyltransferase superfamily. Cation-dependent O-methyltransferase family. In terms of assembly, homodimer.

It carries out the reaction 5-hydroxyuridine(34) in tRNA + S-adenosyl-L-methionine = 5-methoxyuridine(34) in tRNA + S-adenosyl-L-homocysteine + H(+). Catalyzes the methylation of 5-hydroxyuridine (ho5U) to form 5-methoxyuridine (mo5U) at position 34 in tRNAs. This is tRNA 5-hydroxyuridine methyltransferase from Bacillus subtilis (strain 168).